The primary structure comprises 322 residues: Biotin synthase (322 aa).

One can recognise a Radical SAM core domain in the interval 39–266; that stretch reads NQIQVSSLLN…KSVVRLSAGR (228 aa). [4Fe-4S] cluster contacts are provided by Cys-54, Cys-58, and Cys-61. Positions 98, 129, 189, and 261 each coordinate [2Fe-2S] cluster.

The protein belongs to the radical SAM superfamily. Biotin synthase family. In terms of assembly, homodimer. It depends on [4Fe-4S] cluster as a cofactor. [2Fe-2S] cluster is required as a cofactor.

The enzyme catalyses (4R,5S)-dethiobiotin + (sulfur carrier)-SH + 2 reduced [2Fe-2S]-[ferredoxin] + 2 S-adenosyl-L-methionine = (sulfur carrier)-H + biotin + 2 5'-deoxyadenosine + 2 L-methionine + 2 oxidized [2Fe-2S]-[ferredoxin]. The protein operates within cofactor biosynthesis; biotin biosynthesis; biotin from 7,8-diaminononanoate: step 2/2. In terms of biological role, catalyzes the conversion of dethiobiotin (DTB) to biotin by the insertion of a sulfur atom into dethiobiotin via a radical-based mechanism. This is Biotin synthase from Ruthia magnifica subsp. Calyptogena magnifica.